Here is a 968-residue protein sequence, read N- to C-terminus: Putative pectinesterase/pectinesterase inhibitor 26 (968 aa).

Residues 33-53 form a helical membrane-spanning segment; the sequence is IGISVAVLVAIIISSTVTIAI. Residues 71–230 form a pectinesterase inhibitor 26 A region; the sequence is LTPAASLKTV…TEFTSNSLAI (160 aa). 10 N-linked (GlcNAc...) asparagine glycosylation sites follow: asparagine 101, asparagine 158, asparagine 219, asparagine 295, asparagine 352, asparagine 400, asparagine 464, asparagine 541, asparagine 559, and asparagine 603. The interval 265-430 is pectinesterase inhibitor 26 B; sequence LTPAASLRNV…RKFTSNSLAI (166 aa). Residues 453-614 form a pectinesterase inhibitor 26 C region; it reads PTPSSVLRTV…TEFTSNSLAI (162 aa). Residues 660 to 954 form a pectinesterase 26 region; that stretch reads HVTVAADGSG…FTVKYFLRGD (295 aa). Threonine 735 is a binding site for substrate. N-linked (GlcNAc...) asparagine glycosylation is present at asparagine 737. Residue glutamine 765 participates in substrate binding. Catalysis depends on aspartate 788, which acts as the Proton donor; for pectinesterase activity. The cysteines at positions 802 and 822 are disulfide-linked. Catalysis depends on aspartate 809, which acts as the Nucleophile; for pectinesterase activity. N-linked (GlcNAc...) asparagine glycosylation is present at asparagine 863. Substrate contacts are provided by arginine 872 and tryptophan 874. N-linked (GlcNAc...) asparagine glycosylation occurs at asparagine 900.

It in the N-terminal section; belongs to the PMEI family. This sequence in the C-terminal section; belongs to the pectinesterase family. As to expression, expressed in flowers.

The protein localises to the membrane. The catalysed reaction is [(1-&gt;4)-alpha-D-galacturonosyl methyl ester](n) + n H2O = [(1-&gt;4)-alpha-D-galacturonosyl](n) + n methanol + n H(+). The protein operates within glycan metabolism; pectin degradation; 2-dehydro-3-deoxy-D-gluconate from pectin: step 1/5. Its function is as follows. Acts in the modification of cell walls via demethylesterification of cell wall pectin. This is Putative pectinesterase/pectinesterase inhibitor 26 (PME26) from Arabidopsis thaliana (Mouse-ear cress).